The following is a 299-amino-acid chain: tRNA dimethylallyltransferase (299 aa).

Residue 11–18 coordinates ATP; sequence GPTAVGKT. Position 13–18 (13–18) interacts with substrate; that stretch reads TAVGKT. Positions 36-39 are interaction with substrate tRNA; that stretch reads DSQQ.

Belongs to the IPP transferase family. In terms of assembly, monomer. Requires Mg(2+) as cofactor.

It carries out the reaction adenosine(37) in tRNA + dimethylallyl diphosphate = N(6)-dimethylallyladenosine(37) in tRNA + diphosphate. Catalyzes the transfer of a dimethylallyl group onto the adenine at position 37 in tRNAs that read codons beginning with uridine, leading to the formation of N6-(dimethylallyl)adenosine (i(6)A). This Streptococcus pyogenes serotype M6 (strain ATCC BAA-946 / MGAS10394) protein is tRNA dimethylallyltransferase.